Consider the following 171-residue polypeptide: Adenine phosphoribosyltransferase (171 aa).

It belongs to the purine/pyrimidine phosphoribosyltransferase family. In terms of assembly, homodimer.

The protein localises to the cytoplasm. It carries out the reaction AMP + diphosphate = 5-phospho-alpha-D-ribose 1-diphosphate + adenine. Its pathway is purine metabolism; AMP biosynthesis via salvage pathway; AMP from adenine: step 1/1. Functionally, catalyzes a salvage reaction resulting in the formation of AMP, that is energically less costly than de novo synthesis. In Rhodospirillum rubrum (strain ATCC 11170 / ATH 1.1.1 / DSM 467 / LMG 4362 / NCIMB 8255 / S1), this protein is Adenine phosphoribosyltransferase.